An 89-amino-acid chain; its full sequence is Putative antitoxin VapB42 (89 aa).

Its function is as follows. Possibly the antitoxin component of a type II toxin-antitoxin (TA) system. Its cognate toxin is VapC42 (Potential). This is Putative antitoxin VapB42 (vapB42) from Mycobacterium tuberculosis (strain CDC 1551 / Oshkosh).